A 310-amino-acid polypeptide reads, in one-letter code: MNSSSLLTPSSSPSPHLQSPATFDHDDFLHHIFSSTPWPSSVLDDTPPPTSDCAPVTGFHHHDADSRNQITMIPLSHNHPNDALFNGFSTGSLPFHLPQGSGGQTQTQSQATASATTGGATAQPQTKPKVRARRGQATDPHSIAERLRRERIAERMKSLQELVPNGNKTDKASMLDEIIDYVKFLQLQVKVLSMSRLGGAASASSQISEDAGGSHENTSSSGEAKMTEHQVAKLMEEDMGSAMQYLQGKGLCLMPISLATTISTATCPSRSPFVKDTGVPLSPNLSTTIVANGNGSSLVTVKDAPSVSKP.

2 stretches are compositionally biased toward low complexity: residues 1 to 20 (MNSSSLLTPSSSPSPHLQSP) and 104 to 126 (QTQTQSQATASATTGGATAQPQT). 2 disordered regions span residues 1–23 (MNSSSLLTPSSSPSPHLQSPATF) and 95–143 (FHLP…PHSI). The basic motif; degenerate stretch occupies residues 136–149 (QATDPHSIAERLRR). In terms of domain architecture, bHLH spans 136–185 (QATDPHSIAERLRRERIAERMKSLQELVPNGNKTDKASMLDEIIDYVKFL). The segment at 150-185 (ERIAERMKSLQELVPNGNKTDKASMLDEIIDYVKFL) is helix-loop-helix motif. Positions 203 to 225 (ASSQISEDAGGSHENTSSSGEAK) are disordered.

Homodimer. In terms of tissue distribution, expressed constitutively in roots, leaves, stems, and flowers.

It localises to the nucleus. Transcription factor that regulates the development of root hairs. Transcription factor that regulates the development of sperm cells. The sequence is that of Transcription factor LRL2 from Arabidopsis thaliana (Mouse-ear cress).